A 314-amino-acid polypeptide reads, in one-letter code: Serine hydrolase-like protein 2 (314 aa).

The region spanning 33-293 (PPVLCLHGWL…GNHCVHMSEP (261 aa)) is the AB hydrolase-1 domain. S108 is a catalytic residue.

It belongs to the AB hydrolase superfamily.

It localises to the cytoplasm. The protein localises to the perinuclear region. Its subcellular location is the peroxisome. Its function is as follows. Probable serine hydrolase. May be related to cell muscle hypertrophy. The polypeptide is Serine hydrolase-like protein 2 (SERHL2) (Homo sapiens (Human)).